The primary structure comprises 28 residues: Peptide 2 (28 aa).

This sequence belongs to the short scorpion toxin superfamily. Potassium channel inhibitor family. Alpha-KTx 09 subfamily. As to expression, expressed by the venom gland.

Its subcellular location is the secreted. Its function is as follows. Blocks potassium channels. This Hottentotta tamulus sindicus (Scorpion) protein is Peptide 2.